We begin with the raw amino-acid sequence, 296 residues long: 4-hydroxy-tetrahydrodipicolinate synthase (296 aa).

Threonine 49 contributes to the pyruvate binding site. Tyrosine 137 serves as the catalytic Proton donor/acceptor. The active-site Schiff-base intermediate with substrate is the lysine 165. Residue isoleucine 207 coordinates pyruvate.

This sequence belongs to the DapA family. In terms of assembly, homotetramer; dimer of dimers.

It is found in the cytoplasm. It catalyses the reaction L-aspartate 4-semialdehyde + pyruvate = (2S,4S)-4-hydroxy-2,3,4,5-tetrahydrodipicolinate + H2O + H(+). It participates in amino-acid biosynthesis; L-lysine biosynthesis via DAP pathway; (S)-tetrahydrodipicolinate from L-aspartate: step 3/4. Its function is as follows. Catalyzes the condensation of (S)-aspartate-beta-semialdehyde [(S)-ASA] and pyruvate to 4-hydroxy-tetrahydrodipicolinate (HTPA). The chain is 4-hydroxy-tetrahydrodipicolinate synthase from Afipia carboxidovorans (strain ATCC 49405 / DSM 1227 / KCTC 32145 / OM5) (Oligotropha carboxidovorans).